Consider the following 336-residue polypeptide: Inositol 2-dehydrogenase (336 aa).

The protein belongs to the Gfo/Idh/MocA family. Homotetramer.

The catalysed reaction is myo-inositol + NAD(+) = scyllo-inosose + NADH + H(+). Involved in the oxidation of myo-inositol (MI) to 2-keto-myo-inositol (2KMI or 2-inosose). The polypeptide is Inositol 2-dehydrogenase (Salmonella agona (strain SL483)).